The sequence spans 62 residues: uncharacterized protein (62 aa).

The next 2 helical transmembrane spans lie at 7 to 27 (LLLL…VFIA) and 34 to 51 (IIAS…GFTL).

The protein resides in the cell membrane. This is an uncharacterized protein from Bacillus subtilis (strain 168).